A 121-amino-acid chain; its full sequence is Basic phospholipase A2 homolog textilotoxin B chain (121 aa).

7 disulfide bridges follow: cysteine 11–cysteine 72, cysteine 27–cysteine 120, cysteine 29–cysteine 45, cysteine 44–cysteine 101, cysteine 51–cysteine 94, cysteine 61–cysteine 87, and cysteine 80–cysteine 92.

This sequence belongs to the phospholipase A2 family. Group I subfamily. N49 sub-subfamily. Heterohexamer. 2 forms exist: 2 A or 2 B chains, 2 C chains and 2 covalently-linked D chains, and 1 A or 1 B, 1 C, 2 covalently-linked D chains and 2 differentially glycosylated covalently-linked D chains. Textilotoxin was originally described as pentameric. Expressed by the venom gland.

The protein localises to the secreted. In terms of biological role, snake venom oligomeric phospholipase A2 that has potent presynaptic neurotoxicity. Chain B is not itself neurotoxic, but it is essential for the neurotoxicity of textilotoxin. Subunit B possesses a very low phospholipase activity. This is Basic phospholipase A2 homolog textilotoxin B chain from Pseudonaja textilis (Eastern brown snake).